A 194-amino-acid chain; its full sequence is Factor in the germline alpha (194 aa).

Residues 59-111 (ERRRVANAKERERIKNLNRGFAKLKALVPFLPQSRKPSKVDILKGATEYIQIL) enclose the bHLH domain. Positions 121–137 (SEKQSPEEQTHSGRPSD) are enriched in basic and acidic residues. The tract at residues 121–163 (SEKQSPEEQTHSGRPSDPHVSSTRELLGNATQPTSCASGLKKE) is disordered. The segment covering 139–157 (HVSSTRELLGNATQPTSCA) has biased composition (polar residues).

Heterodimer with TCF3/isoform E12. As to expression, expressed only in the oocytes within the ovary and at lower level in the testis. Found in the resting oocytes of the primordial follicle cells, at the periphery of the ovary and in the hilar region. Also detected in growing oocytes, but at lower levels.

It is found in the nucleus. Functionally, germ-line specific transcription factor implicated in postnatal oocyte-specific gene expression. Plays a key regulatory role in the expression of multiple oocyte-specific genes, including those that initiate folliculogenesis and those that encode the zona pellucida (ZP1, ZP2 and ZP3) required for fertilization and early embryonic survival. Essential for oocytes to survive and form primordial follicles. The persistence of FIGLA in adult females suggests that it may regulate additional pathways that are essential for normal ovarian development. Binds to the E-box (5'-CANNTG-3') of the ZPs (ZP1, ZP2, ZP3) promoters. This chain is Factor in the germline alpha (Figla), found in Mus musculus (Mouse).